The sequence spans 63 residues: Sarcotoxin-1B (63 aa).

The N-terminal stretch at 1-23 is a signal peptide; it reads MNFNKVFIFVALILAVFAGQSQA. Arg62 bears the Arginine amide mark.

This sequence belongs to the cecropin family.

The protein localises to the secreted. Sarcotoxins, which are potent bactericidal proteins, are produced in response to injury. They are cytotoxic to both Gram-positive and Gram-negative bacteria. The chain is Sarcotoxin-1B from Sarcophaga peregrina (Flesh fly).